Reading from the N-terminus, the 613-residue chain is UvrABC system protein C (613 aa).

The 79-residue stretch at 20 to 98 folds into the GIY-YIG domain; it reads ERPGVYLMYD…IKRHKPRYNI (79 aa). Residues 209–244 enclose the UVR domain; it reads FDVIESLGHKMQQASDEFEFEKAALYRDKISALRAI.

This sequence belongs to the UvrC family. Interacts with UvrB in an incision complex.

It is found in the cytoplasm. Its function is as follows. The UvrABC repair system catalyzes the recognition and processing of DNA lesions. UvrC both incises the 5' and 3' sides of the lesion. The N-terminal half is responsible for the 3' incision and the C-terminal half is responsible for the 5' incision. The polypeptide is UvrABC system protein C (Hydrogenovibrio crunogenus (strain DSM 25203 / XCL-2) (Thiomicrospira crunogena)).